Here is a 350-residue protein sequence, read N- to C-terminus: Legumin K (350 aa).

Disordered stretches follow at residues 37–86 (LGGN…GNSV) and 102–170 (EEDT…RKNG). 3 stretches are compositionally biased toward basic and acidic residues: residues 104–118 (DTAK…ERSQ), 141–150 (EQSHSHSHRE), and 160–170 (EKQRSEERKNG). The 148-residue stretch at 182 to 329 (ENIADAAGAD…AFGLRQRQVT (148 aa)) folds into the Cupin type-1 domain.

It belongs to the 11S seed storage protein (globulins) family. Hexamer; each subunit is composed of an acidic and a basic chain derived from a single precursor and linked by a disulfide bond.

This protein found in the seeds of many leguminous and non-leguminous plants is the source of sulfur-containing amino acids in seed meals. The polypeptide is Legumin K (LEGK) (Pisum sativum (Garden pea)).